The chain runs to 276 residues: Probable endonuclease 4 (276 aa).

Zn(2+)-binding residues include H70, H108, E144, D177, H180, H211, D224, H226, and E256.

The protein belongs to the AP endonuclease 2 family. Requires Zn(2+) as cofactor.

It catalyses the reaction Endonucleolytic cleavage to 5'-phosphooligonucleotide end-products.. Its function is as follows. Endonuclease IV plays a role in DNA repair. It cleaves phosphodiester bonds at apurinic or apyrimidinic (AP) sites, generating a 3'-hydroxyl group and a 5'-terminal sugar phosphate. In Metamycoplasma arthritidis (strain 158L3-1) (Mycoplasma arthritidis), this protein is Probable endonuclease 4.